The following is a 418-amino-acid chain: Light-independent protochlorophyllide reductase subunit N (418 aa).

[4Fe-4S] cluster-binding residues include C17, C42, and C103.

It belongs to the BchN/ChlN family. As to quaternary structure, protochlorophyllide reductase is composed of three subunits; ChlL, ChlN and ChlB. Forms a heterotetramer of two ChlB and two ChlN subunits. Requires [4Fe-4S] cluster as cofactor.

It carries out the reaction chlorophyllide a + oxidized 2[4Fe-4S]-[ferredoxin] + 2 ADP + 2 phosphate = protochlorophyllide a + reduced 2[4Fe-4S]-[ferredoxin] + 2 ATP + 2 H2O. It functions in the pathway porphyrin-containing compound metabolism; chlorophyll biosynthesis (light-independent). Functionally, component of the dark-operative protochlorophyllide reductase (DPOR) that uses Mg-ATP and reduced ferredoxin to reduce ring D of protochlorophyllide (Pchlide) to form chlorophyllide a (Chlide). This reaction is light-independent. The NB-protein (ChlN-ChlB) is the catalytic component of the complex. The polypeptide is Light-independent protochlorophyllide reductase subunit N (Prochlorococcus marinus (strain NATL2A)).